The primary structure comprises 486 residues: Hydrogenobyrinate a,c-diamide synthase (486 aa).

The span at 254 to 272 (SPPPPLPVPSPGAAPPDPL) shows a compositional bias: pro residues. The interval 254–284 (SPPPPLPVPSPGAAPPDPLVRPGRPRPQAPD) is disordered. Residues 289-474 (RVAMASGAAF…LHTHWAAEPG (186 aa)) enclose the GATase cobBQ-type domain. C372 serves as the catalytic Nucleophile.

This sequence belongs to the CobB/CbiA family. It depends on Mg(2+) as a cofactor.

The enzyme catalyses hydrogenobyrinate + 2 L-glutamine + 2 ATP + 2 H2O = hydrogenobyrinate a,c-diamide + 2 L-glutamate + 2 ADP + 2 phosphate + 2 H(+). It participates in cofactor biosynthesis; adenosylcobalamin biosynthesis; cob(II)yrinate a,c-diamide from precorrin-2 (aerobic route): step 9/10. In terms of biological role, catalyzes the ATP-dependent amidation of the two carboxylate groups at positions a and c of hydrogenobyrinate, using either L-glutamine or ammonia as the nitrogen source. This chain is Hydrogenobyrinate a,c-diamide synthase, found in Streptomyces coelicolor (strain ATCC BAA-471 / A3(2) / M145).